Here is a 148-residue protein sequence, read N- to C-terminus: Translation initiation factor 2 subunit beta (148 aa).

Belongs to the eIF-2-beta/eIF-5 family. In terms of assembly, heterotrimer composed of an alpha, a beta and a gamma chain.

In terms of biological role, eIF-2 functions in the early steps of protein synthesis by forming a ternary complex with GTP and initiator tRNA. This chain is Translation initiation factor 2 subunit beta (eif2b), found in Aeropyrum pernix (strain ATCC 700893 / DSM 11879 / JCM 9820 / NBRC 100138 / K1).